A 503-amino-acid chain; its full sequence is Cytochrome P450 3A14 (503 aa).

A heme-binding site is contributed by Cys-442.

This sequence belongs to the cytochrome P450 family. Heme is required as a cofactor.

The protein resides in the endoplasmic reticulum membrane. The protein localises to the microsome membrane. It catalyses the reaction an organic molecule + reduced [NADPH--hemoprotein reductase] + O2 = an alcohol + oxidized [NADPH--hemoprotein reductase] + H2O + H(+). In terms of biological role, cytochromes P450 are a group of heme-thiolate monooxygenases. In liver microsomes, this enzyme is involved in an NADPH-dependent electron transport pathway. It oxidizes a variety of structurally unrelated compounds, including steroids, fatty acids, and xenobiotics. The chain is Cytochrome P450 3A14 (CYP3A14) from Cavia porcellus (Guinea pig).